We begin with the raw amino-acid sequence, 404 residues long: uncharacterized protein (404 aa).

11 consecutive transmembrane segments (helical) span residues 15-35 (WSLL…PGFL), 43-63 (NTLA…DIFA), 84-104 (MVLP…GLAF), 121-141 (GITP…IFVI), 154-174 (IAGF…APPV), 187-207 (ISIF…ITFA), 231-251 (VVGI…VLGV), 279-299 (IFGL…AYTS), 316-336 (GIII…GQPA), 338-358 (ILVL…GTLL), and 373-393 (PLWL…MGIY).

The protein belongs to the NRAMP family.

The protein localises to the cell membrane. This is an uncharacterized protein from Bacillus subtilis (strain 168).